The sequence spans 469 residues: MTTSVRTRFAPSPTGFIHLGNIRSALYPWAFARKMKGTFVLRIEDTDVERSTSESVDAILEGMAWLGLDFDEGPFYQMQRMDRYREVLKQMQDAGLVYPCYMSTEELDALRERQREAGEKPRYDGTWRPEPGKVLPEPPAGVQPVLRFRNPLTGVVAWDDAVKGRIEISNEELDDLVIARPDGTPTYNFCVVVDDLDMRITHVIRGDDHVNNTPRQINILRALGGEPPVYAHLPTVLNEQGEKMSKRHGAMSVVGYRDAGFLPEAVVNYLARLGWSHGDAEIFSREQFVEWFDLEHLGKSPAQYDHDKLAWLNAHYIKEADNARLAELAKPFFAELGIDEAALAQGADLAAVVGLLKDRASTVKEIAENAAMFYRTPAPDAESLAQHVTDVVRPALADLAAALKTVEWTKEAIAAALKATLGAHKLKMPQLAMPVRLLVAGTTHTPSIDSVLMLFGRDVVVGRIEKALV.

A 'HIGH' region motif is present at residues 11–21 (PSPTGFIHLGN). Basic and acidic residues predominate over residues 114–131 (QREAGEKPRYDGTWRPEP). The segment at 114–139 (QREAGEKPRYDGTWRPEPGKVLPEPP) is disordered. The 'KMSKS' region motif lies at 243–247 (KMSKR). Lys246 contributes to the ATP binding site.

It belongs to the class-I aminoacyl-tRNA synthetase family. Glutamate--tRNA ligase type 1 subfamily. In terms of assembly, monomer.

The protein localises to the cytoplasm. It carries out the reaction tRNA(Glu) + L-glutamate + ATP = L-glutamyl-tRNA(Glu) + AMP + diphosphate. Catalyzes the attachment of glutamate to tRNA(Glu) in a two-step reaction: glutamate is first activated by ATP to form Glu-AMP and then transferred to the acceptor end of tRNA(Glu). The chain is Glutamate--tRNA ligase from Paraburkholderia phytofirmans (strain DSM 17436 / LMG 22146 / PsJN) (Burkholderia phytofirmans).